The following is a 365-amino-acid chain: UDP-N-acetylglucosamine--N-acetylmuramyl-(pentapeptide) pyrophosphoryl-undecaprenol N-acetylglucosamine transferase (365 aa).

UDP-N-acetyl-alpha-D-glucosamine contacts are provided by residues 17–19, N129, R167, S194, I250, 269–274, and Q295; these read TGG and ALTVSE.

Belongs to the glycosyltransferase 28 family. MurG subfamily.

Its subcellular location is the cell inner membrane. The catalysed reaction is di-trans,octa-cis-undecaprenyl diphospho-N-acetyl-alpha-D-muramoyl-L-alanyl-D-glutamyl-meso-2,6-diaminopimeloyl-D-alanyl-D-alanine + UDP-N-acetyl-alpha-D-glucosamine = di-trans,octa-cis-undecaprenyl diphospho-[N-acetyl-alpha-D-glucosaminyl-(1-&gt;4)]-N-acetyl-alpha-D-muramoyl-L-alanyl-D-glutamyl-meso-2,6-diaminopimeloyl-D-alanyl-D-alanine + UDP + H(+). Its pathway is cell wall biogenesis; peptidoglycan biosynthesis. In terms of biological role, cell wall formation. Catalyzes the transfer of a GlcNAc subunit on undecaprenyl-pyrophosphoryl-MurNAc-pentapeptide (lipid intermediate I) to form undecaprenyl-pyrophosphoryl-MurNAc-(pentapeptide)GlcNAc (lipid intermediate II). This Shewanella piezotolerans (strain WP3 / JCM 13877) protein is UDP-N-acetylglucosamine--N-acetylmuramyl-(pentapeptide) pyrophosphoryl-undecaprenol N-acetylglucosamine transferase.